A 40-amino-acid chain; its full sequence is Sauvagin (40 aa).

Q1 is modified (pyrrolidone carboxylic acid). Position 40 is an isoleucine amide (I40).

It belongs to the sauvagine/corticotropin-releasing factor/urotensin I family.

It localises to the secreted. Its function is as follows. Hypotensive and diuretic peptide. In Phyllomedusa sauvagei (Sauvage's leaf frog), this protein is Sauvagin.